The sequence spans 369 residues: Aminomethyltransferase (369 aa).

The protein belongs to the GcvT family. As to quaternary structure, the glycine cleavage system is composed of four proteins: P, T, L and H.

It carries out the reaction N(6)-[(R)-S(8)-aminomethyldihydrolipoyl]-L-lysyl-[protein] + (6S)-5,6,7,8-tetrahydrofolate = N(6)-[(R)-dihydrolipoyl]-L-lysyl-[protein] + (6R)-5,10-methylene-5,6,7,8-tetrahydrofolate + NH4(+). Functionally, the glycine cleavage system catalyzes the degradation of glycine. This chain is Aminomethyltransferase, found in Xanthomonas euvesicatoria pv. vesicatoria (strain 85-10) (Xanthomonas campestris pv. vesicatoria).